We begin with the raw amino-acid sequence, 630 residues long: tRNA uridine 5-carboxymethylaminomethyl modification enzyme MnmG (630 aa).

13 to 18 (GGGHAG) provides a ligand contact to FAD. Residue 273–287 (GPRYCPSIEDKIHRF) coordinates NAD(+).

It belongs to the MnmG family. In terms of assembly, homodimer. Heterotetramer of two MnmE and two MnmG subunits. FAD serves as cofactor.

It localises to the cytoplasm. In terms of biological role, NAD-binding protein involved in the addition of a carboxymethylaminomethyl (cmnm) group at the wobble position (U34) of certain tRNAs, forming tRNA-cmnm(5)s(2)U34. The chain is tRNA uridine 5-carboxymethylaminomethyl modification enzyme MnmG from Pseudomonas aeruginosa (strain LESB58).